Reading from the N-terminus, the 260-residue chain is Putative hydro-lyase Bmul_5125/BMULJ_03391 (260 aa).

The protein belongs to the D-glutamate cyclase family.

The protein is Putative hydro-lyase Bmul_5125/BMULJ_03391 of Burkholderia multivorans (strain ATCC 17616 / 249).